The following is a 60-amino-acid chain: Mastoparan-VB1 (60 aa).

A signal peptide spans 1–23; it reads MKNTILLLFTAFIFLSGFFGMSA. A propeptide spanning residues 24–45 is cleaved from the precursor; the sequence is EALADPKADPLAGPFPDADPDP. 4 AXPX repeats span residues 27-30, 31-34, 35-38, and 40-43; these read ADPK, ADPL, AGPF, and DADP. Leucine 59 carries the leucine amide modification.

In terms of tissue distribution, expressed by the venom gland.

The protein localises to the secreted. Its subcellular location is the target cell membrane. Functionally, antimicrobial peptide. Shows activity against both Gram-positive (S.aureus MIC=1.9-3.75 ug/ml) and -negative (E.coli MIC=15-60 ug/ml) bacteria, as well against fungi (C.albicans MIC=15 ug/ml). Also promotes moderate mast cell degranulation. Does not show hemolytic activity on rabbit and human erythrocytes. Its mast cell degranulation activity may be related to the activation of G-protein coupled receptors in mast cells as well as interaction with other proteins located in cell endosomal membranes in the mast cells. The protein is Mastoparan-VB1 of Vespa bicolor (Black shield wasp).